Consider the following 2621-residue polypeptide: MSCENEAPLTRSFCRTKRRDRFSHEEAARKCRIETHDIEDIRACTQEQLVYATLLSQGDEGAIAEWSFDIPESINIDFLKKAWQDMVRSKAFLRTRIIADDSPGIFLCVVMNGEPLLWTEGDGMDDPWVLGSSLARFRLIEVPNTNQRRLVVKIHHAICDPCSLYAVFESVDHAYQKKKLYNLQQNETPTACTTEGSFDDATAFPELPASVQCPSARHSLEQSVSVGTLPPSLGEITANVWLAWAITQSQYQSSDRVLFGTGSRHDEERPGFPAYVSPRLVVLDSQVAVADILQELENMFIGPAQKRTAVRTPSAEKKGMSGAVQTVVSVRRLAQHRPLTCANLVKSEKQNPFQNYALTLDCQLEKDFLIKVQAHYDHNVIPQWVTQRVLSHFMHVLPQTFHRNRDTKLASLKSLSPYDEAQLAYWNSKHVPVAEEPTHHIIHRICMEQPNAEAICSWDGKFTYNEVDVLSDSLATQLTDLGLGGSGSIIPVYMDKGRWVPIAILGVLKSGAAFTLFDPSHPLQRLKIMAEDVKAKAILCSRMTMELASQIVPQTLQIDDERGWDTIRARPGSHFSRSSRQDDALYVAFTSGSTGKPKAIVIEHGSYCTGAKEHIKAFRLSRKARVLQFALYAFDVSIMEILSTLMAGGCICILNEVQRTTPQDFEKALSSFSVTHAFLTPSFARSLRNAQLPSLDVLILGGEPMSPADAGHWASRNVVLMNAYGPAECSVNTTVQPCAAACPGNIGFTTGAACWVVDPMNHNQLVPIGGIGELLVQGPIVGRGYLNNPTLTKASFVKFVPSISAHLPGAEIIDRAYRTGDLVRQQMDGSIVYIGRKDQQVKIRGQRIELSEVEFQVQKSLEGDVDVVIEAVDIEGKSQPLLVAFLNLGIHGAQANEDLAPLAMPCEEWFRRLESMEGALKHYLPPSMIPNLFLPLVYTPTTPTGKIDRRLLRELSSRLSQAQLELYRNRNKDELKRQPYTQVEETLQRLFSQILGVEQRHISVTDSFFQLGGDSISAIRLIGAARDAGLEFTVSELLSAPTISEVALYSRALSVPKEEASPPPPFVLLGTSAKVPEILQLVANQIKLSNLDNIEDIYPCTALQEGMFALSLKSPGTYTGEVLLRLPGDVDMQRLLSAWQATVEANPILRTQIVQTPKGLFQVVMRRVDFECKQHASLDALGKLHVNQDKGVSINPMCQVALVKHNGDQHFALKIHHALCDGWSLKLILGQLDLAYRKEASLTPSYFNTFIKYLDSIAGWEDYWTSEFRDLQAPIYPALPSPSYMPRPTSLRDHAIHNLHMADSGMRLPILIKLAWSILVSNYTDSDDVVIGLTLNGRNAPVPGIEQLIGPTITTVPLRTRIHEDDTVRTASNCLHNKLTAMISYEQAGLQRIGKLNDNCRTACSFQMQVGIQPPADFNTENYCFDVLEHSIGPSMDYSDFSTYGIVVVCELSRSGTALHVKMRHDPDLVSPDEANCMVHLFEHLLRQLCENPDMRLNQLELAGPQDIKQFAKWNATAPVPVERCLHELIMNHSRTQPGASAICGWDGYVTYQELGLLITQLAYYLRTRFHIRPGMNVPICPNRSKWAIVSMLSVLYAGGSCVLLDPNHPQARMQTVISDTAADIIICNAGTEEKVTGLTRHLVIVGPELLESLPTPASLPQCLSDATPMDPAFVIFTSGSTGKPKGIIMSHKSLSTSIYYHSPQLGVNQQTRTLHFCSYAFDASIYEIFTTLVCGGCVCVPSASDCTDNLAGFITHFDVNLAIMAPSVARLLHPDSVPSLQCLVLGGEALTWEIVNLWADRVRLVNGYGPAEATIMAAGVVQASDWITGLIGPVVGANPWITKPFNPDQLVARGMIGELLIEGPVLADGYINAPEKSADPFIPAPTWLRSIRPNSAGATRLYRTGDLVQQQRDGSIRFMGRRDNQVKLRGQRIELQEVEHCVTSHVPDAVVVAEVVSFLTNERRRNELVVFIRDSTAGTEPDNITSNPEETSAIFSSPTKVDHTAMAELKAHMARNLPRYMVPWIILPLDDIPKTASGKTDRARLRVAAGKLEQKTLDQYMNIANIVKRQPSTTQEALVRSIFAQVLSLPESTIGVDDSFFNIGGDSISAMRFLTLCRQANLHLAMPAFLTYNTVALFCTNASTSIDISRFDASEEMDRNTPLVTIDHEKHISTLRTTLCNQLGLDSVLSIEDIYPCSSSHAGIIRGLAGSGDRHQVRAIFKLHGSKVVDPAHVLECWHKLIQRHAILRTVIVNNPLHPGEFLHVVLKQPPIDMASLSFQSPNVVTQLCDIHPSFDWETSPAHQMVIAQGYEGEAYCKLEAGKALIDWSSFSILVDELCLAINHLLPSKPAPLYKDFISYVQRQPLDKIMNYWERTLSGVTSSIIPRSLPEAPADPDAVPVLHSTRITLDGFKDIDAFWRGNRLTLTNIFQVAWGLVLSFHSRLPEVCFGTVVSGRDIPVTNIEDMVGPCFNILPCRLDLSPDRNIMETLQQNQQDMQRRTDHQHCSISEITRGVRQTTSTPLFNTCLSVQVSLSSQMEEPSGDLGHDIQVSMVDIHDPTEYDICLAVLIYRTQIEIDLRYWSFAFSEQDATRLLNNLRQAISHIVAHSARPIASIDWEA.

Residues 446–844 form an adenylation 1 region; that stretch reads CMEQPNAEAI…GRKDQQVKIR (399 aa). The 77-residue stretch at 978–1054 folds into the Carrier 1 domain; the sequence is QPYTQVEETL…EVALYSRALS (77 aa). At Ser-1015 the chain carries O-(pantetheine 4'-phosphoryl)serine. A condensation 1 region spans residues 1095–1506; that stretch reads EDIYPCTALQ…LNQLELAGPQ (412 aa). Residues 1534–1930 are adenylation 2; sequence SRTQPGASAI…GRRDNQVKLR (397 aa). In terms of domain architecture, Carrier 2 spans 2071 to 2147; that stretch reads QPSTTQEALV…LFCTNASTSI (77 aa). Position 2108 is an O-(pantetheine 4'-phosphoryl)serine (Ser-2108). Positions 2220 to 2618 are condensation 2; it reads AIFKLHGSKV…HSARPIASID (399 aa).

It belongs to the NRP synthetase family.

It participates in alkaloid biosynthesis. Functionally, nonribosomal peptide synthetase; part of the gene cluster that mediates the biosynthesis of the dimeric diketopiperazine alkaloid ditryptophenaline. The nonribosomal peptide synthase dtpA accepts L-tryptophan and L-phenylalanine as its substrates and forms the phenylalanyl-tryptophanyl cyclic dipeptide product cyclophenylalanyltryptophenyl. The N-methyltransferase dtpB is responsible for the N-methylation of cyclophenylalanyltryptophenyl to yield cyclo-N-methylphenylalanyltryptophenyl. The cytochrome P450 monooxygenase is responsible not only for pyrroloindole ring formation but also for concurrent dimerization of N-methylphenylalanyltryptophanyl diketopiperazine monomers into a homodimeric product. The sequence is that of Nonribosomal peptide synthetase dtpA from Aspergillus flavus (strain ATCC 200026 / FGSC A1120 / IAM 13836 / NRRL 3357 / JCM 12722 / SRRC 167).